The following is a 114-amino-acid chain: Large ribosomal subunit protein bL17 (114 aa).

Belongs to the bacterial ribosomal protein bL17 family. Part of the 50S ribosomal subunit. Contacts protein L32.

In Halothermothrix orenii (strain H 168 / OCM 544 / DSM 9562), this protein is Large ribosomal subunit protein bL17.